Consider the following 337-residue polypeptide: LIX1-like protein (337 aa).

Positions 1–55 are disordered; sequence METMRAQRLQPGVGVGGRGTLRALRPGVTGAPTSAATPPVGPPPAPPPPAPPLPP. Over residues 26 to 38 the composition is skewed to low complexity; sequence PGVTGAPTSAATP. Residues 39–55 are compositionally biased toward pro residues; the sequence is PVGPPPAPPPPAPPLPP.

It belongs to the LIX1 family.

In Mus musculus (Mouse), this protein is LIX1-like protein (Lix1l).